Here is a 52-residue protein sequence, read N- to C-terminus: Light-harvesting protein B-880 alpha chain (52 aa).

At 1-12 the chain is on the cytoplasmic side; the sequence is MWKVWLLFDPRR. The helical transmembrane segment at 13–33 threads the bilayer; sequence TLVALFTFLFVLALLIHFILL. A bacteriochlorophyll is bound at residue His-29. Residues 34 to 52 lie on the Periplasmic side of the membrane; sequence STDRFNWMQGAPTAPAQTS.

The protein belongs to the antenna complex alpha subunit family. The core complex is formed by different alpha and beta chains, binding bacteriochlorophyll molecules, and arranged most probably in tetrameric structures disposed around the reaction center. The non-pigmented gamma chains may constitute additional components.

The protein localises to the cell inner membrane. Its function is as follows. Antenna complexes are light-harvesting systems, which transfer the excitation energy to the reaction centers. The protein is Light-harvesting protein B-880 alpha chain of Afifella marina (Rhodobium marinum).